A 100-amino-acid chain; its full sequence is Cell division topological specificity factor (100 aa).

This sequence belongs to the MinE family.

Functionally, prevents the cell division inhibition by proteins MinC and MinD at internal division sites while permitting inhibition at polar sites. This ensures cell division at the proper site by restricting the formation of a division septum at the midpoint of the long axis of the cell. The chain is Cell division topological specificity factor from Synechococcus sp. (strain JA-2-3B'a(2-13)) (Cyanobacteria bacterium Yellowstone B-Prime).